The sequence spans 277 residues: Undecaprenyl-diphosphatase (277 aa).

A run of 7 helical transmembrane segments spans residues 1–21 (MTWIEAIILGLVQGLTEFLPI), 41–61 (GAAFTAITQLGTELAVLIYFW), 90–110 (WLIIVGSIPIAVLGLLLEDWI), 114–134 (FRSLWITATMLIVFGVLLALA), 191–211 (AFLLAVPAVFASGLYKLYTSL), 224–244 (ETLVATAVAFVVAYAVIAWLM), and 255–275 (FVWYRILLGGVLFALLGAGVI).

This sequence belongs to the UppP family.

It is found in the cell membrane. It carries out the reaction di-trans,octa-cis-undecaprenyl diphosphate + H2O = di-trans,octa-cis-undecaprenyl phosphate + phosphate + H(+). Functionally, catalyzes the dephosphorylation of undecaprenyl diphosphate (UPP). Confers resistance to bacitracin. This chain is Undecaprenyl-diphosphatase, found in Micrococcus luteus (strain ATCC 4698 / DSM 20030 / JCM 1464 / CCM 169 / CCUG 5858 / IAM 1056 / NBRC 3333 / NCIMB 9278 / NCTC 2665 / VKM Ac-2230) (Micrococcus lysodeikticus).